A 136-amino-acid polypeptide reads, in one-letter code: Small ribosomal subunit protein uS9 (136 aa).

Residues 111 to 136 form a disordered region; that stretch reads DARRTEPHKPSRSTKGPRAKRQKSYR. Positions 120–136 are enriched in basic residues; sequence PSRSTKGPRAKRQKSYR.

It belongs to the universal ribosomal protein uS9 family.

This is Small ribosomal subunit protein uS9 (rps9) from Methanocaldococcus jannaschii (strain ATCC 43067 / DSM 2661 / JAL-1 / JCM 10045 / NBRC 100440) (Methanococcus jannaschii).